Here is an 86-residue protein sequence, read N- to C-terminus: Large ribosomal subunit protein bL27 (86 aa).

The segment at M1–G22 is disordered.

The protein belongs to the bacterial ribosomal protein bL27 family.

This chain is Large ribosomal subunit protein bL27, found in Acidithiobacillus ferrooxidans (strain ATCC 23270 / DSM 14882 / CIP 104768 / NCIMB 8455) (Ferrobacillus ferrooxidans (strain ATCC 23270)).